Here is a 469-residue protein sequence, read N- to C-terminus: Uridine kinase-like protein 4 (469 aa).

The segment at 46-249 is uridine kinase; sequence QRQPFVIGVA…IVQHICTKLG (204 aa). A uracil phosphoribosyltransferase region spans residues 259–469; sequence NLYVIHSTFQ…GDRYFGTDDD (211 aa). Residues Lys283, Arg292, and 326 to 329 contribute to the GTP site; that span reads CKRL. 5-phospho-alpha-D-ribose 1-diphosphate contacts are provided by Arg336 and Arg361. Residue Arg381 coordinates GTP. Residues Asp387, 392–395, and Glu458 contribute to the 5-phospho-alpha-D-ribose 1-diphosphate site; that span reads TGNS. 457-459 is a binding site for uracil; it reads GEF.

The protein in the N-terminal section; belongs to the uridine kinase family. It in the C-terminal section; belongs to the UPRTase family. It depends on Mg(2+) as a cofactor.

It catalyses the reaction UMP + diphosphate = 5-phospho-alpha-D-ribose 1-diphosphate + uracil. It carries out the reaction cytidine + ATP = CMP + ADP + H(+). The catalysed reaction is uridine + ATP = UMP + ADP + H(+). Its pathway is pyrimidine metabolism; UMP biosynthesis via salvage pathway; UMP from uracil: step 1/1. The protein operates within pyrimidine metabolism; CTP biosynthesis via salvage pathway; CTP from cytidine: step 1/3. It participates in pyrimidine metabolism; UMP biosynthesis via salvage pathway; UMP from uridine: step 1/1. Allosterically activated by GTP. In terms of biological role, involved in the pyrimidine salvage pathway. The uracil phosphoribosyltransferase (UPRT) activity, that catalyzes the conversion of uracil and 5-phospho-alpha-D-ribose 1-diphosphate (PRPP) to UMP and diphosphate, is unsure. This is Uridine kinase-like protein 4 (UKL4) from Arabidopsis thaliana (Mouse-ear cress).